The sequence spans 89 residues: Large ribosomal subunit protein bL27 (89 aa).

The interval 1 to 24 (MAHKKGTGSTRNGRDSRSQRLGVK) is disordered.

It belongs to the bacterial ribosomal protein bL27 family.

The chain is Large ribosomal subunit protein bL27 from Microcystis aeruginosa (strain NIES-843 / IAM M-2473).